Here is a 320-residue protein sequence, read N- to C-terminus: D-amino-acid oxidase (320 aa).

FAD is bound by residues alanine 13, glycine 14, valine 15, threonine 42, threonine 43, serine 44, glycine 48, and alanine 49. The D-proline site is built by tyrosine 220 and arginine 274. Positions 220 and 274 each coordinate D-serine. 5 residues coordinate FAD: arginine 274, glycine 299, glycine 300, glycine 302, and threonine 304. A D-proline-binding site is contributed by glycine 300. D-serine is bound at residue glycine 300.

Belongs to the DAMOX/DASOX family. FAD is required as a cofactor.

The protein localises to the cytoplasm. Its subcellular location is the secreted. It localises to the cell wall. It catalyses the reaction a D-alpha-amino acid + O2 + H2O = a 2-oxocarboxylate + H2O2 + NH4(+). Catalyzes the oxidative deamination of D-amino acids with broad substrate specificity. Enables the organism to utilize D-amino acids as a source of nutrients. Enables the organism to utilize glycine as a carbon source. This Mycobacterium tuberculosis (strain ATCC 25177 / H37Ra) protein is D-amino-acid oxidase.